Consider the following 307-residue polypeptide: Malate dehydrogenase (307 aa).

Residues 8-13 (GAGNVG) and D32 contribute to the NAD(+) site. R81 and R87 together coordinate substrate. Residues N94 and 117 to 119 (VSN) each bind NAD(+). N119 and R150 together coordinate substrate. H174 serves as the catalytic Proton acceptor.

Belongs to the LDH/MDH superfamily. MDH type 3 family.

It carries out the reaction (S)-malate + NAD(+) = oxaloacetate + NADH + H(+). Functionally, catalyzes the reversible oxidation of malate to oxaloacetate. The chain is Malate dehydrogenase from Dehalococcoides mccartyi (strain CBDB1).